The following is a 26-amino-acid chain: DNA-binding transcriptional regulator NtrC (26 aa).

Residues 4–26 enclose the Response regulatory domain; the sequence is TILVADDDAAIRTVLNQALSRAG.

In terms of processing, phosphorylated and dephosphorylated by NtrB.

The protein localises to the cytoplasm. Its function is as follows. Member of the two-component regulatory system NtrB/NtrC, which controls expression of the nitrogen-regulated (ntr) genes in response to nitrogen limitation. Phosphorylated NtrC binds directly to DNA and stimulates the formation of open promoter-sigma54-RNA polymerase complexes. The protein is DNA-binding transcriptional regulator NtrC (ntrC) of Rhizobium leguminosarum bv. phaseoli.